We begin with the raw amino-acid sequence, 217 residues long: MFGKNAKVDLELNRDVEQLIKTGGKEKLLPIVQAGEPVLRQRTVAYNGQLSKRTLAKLIDTMHTTMLEAPGVGLAATQIGLGLALAVVEDHVRDDEDDPREIAEFPFHVIINPSYKPTSDKTASFYEGCLSFDGYQAVRKRWLDITAEWDDEDGKHHSEPLHGWPARIFQHETDHLSGELYIDRAEIRSLTTNENLEDYWCEDPVPTEAAEELGFAL.

Cys-129 and His-171 together coordinate Fe cation. Residue Glu-172 is part of the active site. Residue His-175 coordinates Fe cation.

It belongs to the polypeptide deformylase family. Fe(2+) is required as a cofactor.

The enzyme catalyses N-terminal N-formyl-L-methionyl-[peptide] + H2O = N-terminal L-methionyl-[peptide] + formate. Functionally, removes the formyl group from the N-terminal Met of newly synthesized proteins. Requires at least a dipeptide for an efficient rate of reaction. N-terminal L-methionine is a prerequisite for activity but the enzyme has broad specificity at other positions. This Bifidobacterium longum (strain NCC 2705) protein is Peptide deformylase 1.